Consider the following 266-residue polypeptide: PTS system sorbose-specific EIIC component (266 aa).

The PTS EIIC type-4 domain occupies 1 to 237 (MEISTLQIIA…GGVGVIIALI (237 aa)). Transmembrane regions (helical) follow at residues 3–23 (ISTLQIIAIFIFSCIAGMGSV), 33–53 (LIACTVIGLILGDLKTGVMLG), 79–99 (IISAILVIVGHQSIAIGIAIA), 100–120 (LPVAAAGQVLTVFARTITVVF), 151–171 (VAIPALVVSLFVSADMVSSML), 183–203 (QIAGGFIVVVGYAMVLRMMGV), and 219–239 (YLDFSLLAFGGVGVIIALIYI).

It is found in the cell inner membrane. The phosphoenolpyruvate-dependent sugar phosphotransferase system (PTS), a major carbohydrate active transport system, catalyzes the phosphorylation of incoming sugar substrates concomitant with their translocation across the cell membrane. The enzyme II SorABFM PTS system is involved in L-sorbose transport. The protein is PTS system sorbose-specific EIIC component of Klebsiella pneumoniae.